The sequence spans 219 residues: Ribose-5-phosphate isomerase A (219 aa).

Substrate is bound by residues 28–31 (TGST), 81–84 (DGAD), and 94–97 (KGGG). E103 (proton acceptor) is an active-site residue. K121 is a binding site for substrate.

Belongs to the ribose 5-phosphate isomerase family. As to quaternary structure, homodimer.

It catalyses the reaction aldehydo-D-ribose 5-phosphate = D-ribulose 5-phosphate. Its pathway is carbohydrate degradation; pentose phosphate pathway; D-ribose 5-phosphate from D-ribulose 5-phosphate (non-oxidative stage): step 1/1. Catalyzes the reversible conversion of ribose-5-phosphate to ribulose 5-phosphate. This Salmonella choleraesuis (strain SC-B67) protein is Ribose-5-phosphate isomerase A.